The following is a 168-amino-acid chain: 3-isopropylmalate dehydratase small subunit (168 aa).

Belongs to the LeuD family. LeuD type 2 subfamily. In terms of assembly, heterodimer of LeuC and LeuD.

The enzyme catalyses (2R,3S)-3-isopropylmalate = (2S)-2-isopropylmalate. It functions in the pathway amino-acid biosynthesis; L-leucine biosynthesis; L-leucine from 3-methyl-2-oxobutanoate: step 2/4. Catalyzes the isomerization between 2-isopropylmalate and 3-isopropylmalate, via the formation of 2-isopropylmaleate. This Sulfurisphaera tokodaii (strain DSM 16993 / JCM 10545 / NBRC 100140 / 7) (Sulfolobus tokodaii) protein is 3-isopropylmalate dehydratase small subunit (leuD).